The chain runs to 813 residues: Leucine--tRNA ligase (813 aa).

The 'HIGH' region motif lies at P39–H49. The 'KMSKS' region motif lies at K582–S586. Position 585 (K585) interacts with ATP.

This sequence belongs to the class-I aminoacyl-tRNA synthetase family.

It localises to the cytoplasm. It carries out the reaction tRNA(Leu) + L-leucine + ATP = L-leucyl-tRNA(Leu) + AMP + diphosphate. The sequence is that of Leucine--tRNA ligase from Campylobacter hominis (strain ATCC BAA-381 / DSM 21671 / CCUG 45161 / LMG 19568 / NCTC 13146 / CH001A).